A 394-amino-acid chain; its full sequence is GDSL esterase/lipase At1g31550 (394 aa).

The first 27 residues, 1 to 27 (MASLDSHVLMKLGSLFLSTLFVSIVSS), serve as a signal peptide directing secretion. Ser43 acts as the Nucleophile in catalysis. N-linked (GlcNAc...) asparagine glycans are attached at residues Asn138, Asn290, and Asn322. Active-site residues include Asp345 and His348.

This sequence belongs to the 'GDSL' lipolytic enzyme family.

It localises to the secreted. The chain is GDSL esterase/lipase At1g31550 from Arabidopsis thaliana (Mouse-ear cress).